The sequence spans 396 residues: Homoserine O-acetyltransferase (396 aa).

The 318-residue stretch at 53–370 (NAILVCHALT…DRGHDAFLLE (318 aa)) folds into the AB hydrolase-1 domain. Residue Ser158 is the Nucleophile of the active site. Arg228 contributes to the substrate binding site. Residues Asp331 and His364 contribute to the active site. Substrate is bound at residue Asp365.

Belongs to the AB hydrolase superfamily. MetX family. In terms of assembly, homodimer.

The protein localises to the cytoplasm. The catalysed reaction is L-homoserine + acetyl-CoA = O-acetyl-L-homoserine + CoA. The protein operates within amino-acid biosynthesis; L-methionine biosynthesis via de novo pathway; O-acetyl-L-homoserine from L-homoserine: step 1/1. Functionally, transfers an acetyl group from acetyl-CoA to L-homoserine, forming acetyl-L-homoserine. In Gluconobacter oxydans (strain 621H) (Gluconobacter suboxydans), this protein is Homoserine O-acetyltransferase.